We begin with the raw amino-acid sequence, 118 residues long: Succinate dehydrogenase assembly factor 1, mitochondrial (118 aa).

The LYR motif 1; required for interaction with HSC20 signature appears at 14–16 (LYR). An LYR motif 2; not required for interaction with HSC20 motif is present at residues 53–55 (LYR). The tract at residues 53–65 (LYRRGRRQLQMLR) is interaction with SDHB. A disordered region spans residues 72–118 (MGAFVRTRGPTEESNGAGAPGTLSGEGDDPRKPLDSMRTPKTPLDGR).

The protein belongs to the complex I LYR family. SDHAF1 subfamily. In terms of assembly, interacts with SDHB within an SDHA-SDHB subcomplex. Also interacts with the iron-sulfur transfer complex formed by HSC20, HSPA9 and ISCU through direct binding to HSC20. Binding of SDHAF1 to SDHB precedes and is necessary for recruitment of the iron-sulfur transfer complex by SDHAF1.

It is found in the mitochondrion matrix. Functionally, plays an essential role in the assembly of succinate dehydrogenase (SDH), an enzyme complex (also referred to as respiratory complex II) that is a component of both the tricarboxylic acid (TCA) cycle and the mitochondrial electron transport chain, and which couples the oxidation of succinate to fumarate with the reduction of ubiquinone (coenzyme Q) to ubiquinol. Promotes maturation of the iron-sulfur protein subunit SDHB of the SDH catalytic dimer, protecting it from the deleterious effects of oxidants. May act together with SDHAF3. Contributes to iron-sulfur cluster incorporation into SDHB by binding to SDHB and recruiting the iron-sulfur transfer complex formed by HSC20, HSPA9 and ISCU through direct binding to HSC20. In Bos taurus (Bovine), this protein is Succinate dehydrogenase assembly factor 1, mitochondrial.